A 1643-amino-acid chain; its full sequence is DNA-directed RNA polymerase subunit beta' (1643 aa).

4 residues coordinate Zn(2+): Cys-64, Cys-66, Cys-79, and Cys-82. Positions 684, 686, and 688 each coordinate Mg(2+). 4 residues coordinate Zn(2+): Cys-1046, Cys-1239, Cys-1246, and Cys-1249.

Belongs to the RNA polymerase beta' chain family. The RNAP catalytic core consists of 2 alpha, 1 beta, 1 beta' and 1 omega subunit. When a sigma factor is associated with the core the holoenzyme is formed, which can initiate transcription. Requires Mg(2+) as cofactor. The cofactor is Zn(2+).

The catalysed reaction is RNA(n) + a ribonucleoside 5'-triphosphate = RNA(n+1) + diphosphate. DNA-dependent RNA polymerase catalyzes the transcription of DNA into RNA using the four ribonucleoside triphosphates as substrates. This chain is DNA-directed RNA polymerase subunit beta', found in Petrotoga mobilis (strain DSM 10674 / SJ95).